We begin with the raw amino-acid sequence, 186 residues long: MVDVKTCLDNAQEKMDMAVMYLEEALAHIRAGKASTRLLDGIRVDSYGSMVPISNVAALSTPDARSITIKPWDKSMFRAIEKAIIDSDLGIMPENNGEVIRIGIPPLTEERRRQLAKQCKAEGETAKVSVRNARRDGIDALKKAVKDGLAEDEQKNAEAKLQKIHDKYIKQIEDMLADKDKEIMTV.

The protein belongs to the RRF family.

Its subcellular location is the cytoplasm. Functionally, responsible for the release of ribosomes from messenger RNA at the termination of protein biosynthesis. May increase the efficiency of translation by recycling ribosomes from one round of translation to another. The sequence is that of Ribosome-recycling factor from Bacteroides thetaiotaomicron (strain ATCC 29148 / DSM 2079 / JCM 5827 / CCUG 10774 / NCTC 10582 / VPI-5482 / E50).